A 217-amino-acid chain; its full sequence is Somatotropin (217 aa).

The N-terminal stretch at 1 to 26 is a signal peptide; the sequence is MATGSHTTTLLLAVALLGLPWPQEAG. Residue histidine 46 coordinates Zn(2+). An intrachain disulfide couples cysteine 79 to cysteine 190. Glutamate 199 is a Zn(2+) binding site. Cysteine 207 and cysteine 215 form a disulfide bridge.

It belongs to the somatotropin/prolactin family.

It is found in the secreted. Functionally, plays an important role in growth control. Its major role in stimulating body growth is to stimulate the liver and other tissues to secrete IGF1. It stimulates both the differentiation and proliferation of myoblasts. It also stimulates amino acid uptake and protein synthesis in muscle and other tissues. The polypeptide is Somatotropin (GH1) (Galago senegalensis (Northern lesser bushbaby)).